The chain runs to 157 residues: NAD(P)H-quinone oxidoreductase subunit N (157 aa).

Belongs to the complex I NdhN subunit family. As to quaternary structure, NDH-1 can be composed of about 15 different subunits; different subcomplexes with different compositions have been identified which probably have different functions.

Its subcellular location is the cellular thylakoid membrane. It catalyses the reaction a plastoquinone + NADH + (n+1) H(+)(in) = a plastoquinol + NAD(+) + n H(+)(out). The catalysed reaction is a plastoquinone + NADPH + (n+1) H(+)(in) = a plastoquinol + NADP(+) + n H(+)(out). Its function is as follows. NDH-1 shuttles electrons from an unknown electron donor, via FMN and iron-sulfur (Fe-S) centers, to quinones in the respiratory and/or the photosynthetic chain. The immediate electron acceptor for the enzyme in this species is believed to be plastoquinone. Couples the redox reaction to proton translocation, and thus conserves the redox energy in a proton gradient. Cyanobacterial NDH-1 also plays a role in inorganic carbon-concentration. This chain is NAD(P)H-quinone oxidoreductase subunit N, found in Picosynechococcus sp. (strain ATCC 27264 / PCC 7002 / PR-6) (Agmenellum quadruplicatum).